A 261-amino-acid chain; its full sequence is Cytochrome c oxidase subunit 3 (261 aa).

Residues 1 to 15 (MAHQAHAYHMVDPSP) lie on the Mitochondrial matrix side of the membrane. A helical membrane pass occupies residues 16 to 34 (WPLTGAIAALLLTSGTAVW). Over 35-40 (FHFHSL) the chain is Mitochondrial intermembrane. The helical transmembrane segment at 41–66 (TLLTLGNILLLLTMYQWWRDIIREGT) threads the bilayer. Residues 67–72 (FQGHHT) are Mitochondrial matrix-facing. The chain crosses the membrane as a helical span at residues 73-105 (PPVQKGLRYGMILFITSEVFFFLGFFWAFYHAS). Residues 106-128 (LAPTPELGGCWPPAGITTLDPFE) lie on the Mitochondrial intermembrane side of the membrane. The helical transmembrane segment at 129–152 (VPLLNTAVLLASGVTVTWAHHSIM) threads the bilayer. Residues 153–155 (EGE) are Mitochondrial matrix-facing. A helical membrane pass occupies residues 156-183 (RKQTIQALTLTILLGFYFTFLQGMEYYE). Topologically, residues 184 to 190 (APFTIAD) are mitochondrial intermembrane. Residues 191 to 223 (GVYGSTFFVATGFHGLHVIIGSTFLAVCLLRQV) traverse the membrane as a helical segment. Over 224–232 (QYHFTSEHH) the chain is Mitochondrial matrix. A helical transmembrane segment spans residues 233–256 (FGFEAAAWYWHFVDVVWLFLYVSI). Over 257-261 (YWWGS) the chain is Mitochondrial intermembrane.

Belongs to the cytochrome c oxidase subunit 3 family. As to quaternary structure, component of the cytochrome c oxidase (complex IV, CIV), a multisubunit enzyme composed of 14 subunits. The complex is composed of a catalytic core of 3 subunits MT-CO1, MT-CO2 and MT-CO3, encoded in the mitochondrial DNA, and 11 supernumerary subunits COX4I, COX5A, COX5B, COX6A, COX6B, COX6C, COX7A, COX7B, COX7C, COX8 and NDUFA4, which are encoded in the nuclear genome. The complex exists as a monomer or a dimer and forms supercomplexes (SCs) in the inner mitochondrial membrane with NADH-ubiquinone oxidoreductase (complex I, CI) and ubiquinol-cytochrome c oxidoreductase (cytochrome b-c1 complex, complex III, CIII), resulting in different assemblies (supercomplex SCI(1)III(2)IV(1) and megacomplex MCI(2)III(2)IV(2)).

The protein resides in the mitochondrion inner membrane. It carries out the reaction 4 Fe(II)-[cytochrome c] + O2 + 8 H(+)(in) = 4 Fe(III)-[cytochrome c] + 2 H2O + 4 H(+)(out). Functionally, component of the cytochrome c oxidase, the last enzyme in the mitochondrial electron transport chain which drives oxidative phosphorylation. The respiratory chain contains 3 multisubunit complexes succinate dehydrogenase (complex II, CII), ubiquinol-cytochrome c oxidoreductase (cytochrome b-c1 complex, complex III, CIII) and cytochrome c oxidase (complex IV, CIV), that cooperate to transfer electrons derived from NADH and succinate to molecular oxygen, creating an electrochemical gradient over the inner membrane that drives transmembrane transport and the ATP synthase. Cytochrome c oxidase is the component of the respiratory chain that catalyzes the reduction of oxygen to water. Electrons originating from reduced cytochrome c in the intermembrane space (IMS) are transferred via the dinuclear copper A center (CU(A)) of subunit 2 and heme A of subunit 1 to the active site in subunit 1, a binuclear center (BNC) formed by heme A3 and copper B (CU(B)). The BNC reduces molecular oxygen to 2 water molecules using 4 electrons from cytochrome c in the IMS and 4 protons from the mitochondrial matrix. The polypeptide is Cytochrome c oxidase subunit 3 (mt-co3) (Oncorhynchus mykiss (Rainbow trout)).